The following is a 526-amino-acid chain: Germ cell-less protein-like 2 (526 aa).

Positions methionine 1–proline 85 are disordered. The short motif at serine 49–serine 55 is the Nuclear localization signal element. The span at cysteine 62–lysine 77 shows a compositional bias: basic and acidic residues. A Nuclear localization signal motif is present at residues proline 85–arginine 91. In terms of domain architecture, BTB spans serine 108 to proline 178.

As to quaternary structure, interacts with CUL3. In terms of tissue distribution, expressed predominantly in testis.

It is found in the nucleus matrix. The protein operates within protein modification; protein ubiquitination. In terms of biological role, possible function in spermatogenesis. Probable substrate-specific adapter of an E3 ubiquitin-protein ligase complex which mediates the ubiquitination and subsequent proteasomal degradation of target proteins. This is Germ cell-less protein-like 2 from Homo sapiens (Human).